We begin with the raw amino-acid sequence, 422 residues long: Adhesin YadA (422 aa).

A signal peptide spans 1–25; the sequence is MTKDFKISVSAALISALFSSPYAFA. A surface exposed passenger domain region spans residues 26 to 330; that stretch reads NNDEVHFTAV…KKAIRESNQY (305 aa). Residues 206–236 are a coiled coil; the sequence is VNVAQLKKEIEKTQVNANKKSAEVLGIANNY. Residues 331–368 form an outer membrane translocation of the passenger domain region; that stretch reads TDHKFRQLDNRLDKLDTRVDKGLASSAALNSLFQPYGV. Transmembrane regions (beta stranded) follow at residues 369 to 379, 383 to 394, 401 to 407, and 411 to 422; these read GKVNFTAGVGG, SQALAIGSGYRV, KAGVAYA, and DVMYNASFNIEW. The interval 369–422 is translocator domain; the sequence is GKVNFTAGVGGYRSSQALAIGSGYRVNESVALKAGVAYAGSSDVMYNASFNIEW.

It belongs to the autotransporter-2 (AT-2) (TC 1.B.40) family. Homotrimer; trimers are very stable, not disrupted by heating at 95 degrees Celsius for 10 minutes in SDS sample buffer.

The protein resides in the cell surface. It localises to the cell outer membrane. In terms of biological role, collagen-binding outer membrane protein forming a fibrillar matrix on the bacterial cell surface and phagocytosis resistance. Promotes initial attachment and invasion of eukaryotic cells. Also protects the bacteria by being responsible for agglutination, serum resistance and complement inactivation. Gly-389 plays an important role in this protein; replacing it with increasingly large polar residues decreases expression levels and trimer stability. Residues larger than Ser (Thr, Asn or His) significantly decrease serume resistance and bacterial autoagglution without affecting adhesion to host cells or host cell cytokine production. This chain is Adhesin YadA, found in Yersinia enterocolitica serotype O:8 / biotype 1B (strain NCTC 13174 / 8081).